The following is a 159-amino-acid chain: Probable cyclic pyranopterin monophosphate synthase (159 aa).

Residues 75-77 (LCH) and 111-112 (ME) each bind substrate. The active site involves D126.

The protein belongs to the MoaC family. Homohexamer; trimer of dimers.

The catalysed reaction is (8S)-3',8-cyclo-7,8-dihydroguanosine 5'-triphosphate = cyclic pyranopterin phosphate + diphosphate. It participates in cofactor biosynthesis; molybdopterin biosynthesis. Functionally, catalyzes the conversion of (8S)-3',8-cyclo-7,8-dihydroguanosine 5'-triphosphate to cyclic pyranopterin monophosphate (cPMP). The sequence is that of Probable cyclic pyranopterin monophosphate synthase from Pyrococcus horikoshii (strain ATCC 700860 / DSM 12428 / JCM 9974 / NBRC 100139 / OT-3).